We begin with the raw amino-acid sequence, 452 residues long: Exodeoxyribonuclease 7 large subunit (452 aa).

It belongs to the XseA family. In terms of assembly, heterooligomer composed of large and small subunits.

It is found in the cytoplasm. It catalyses the reaction Exonucleolytic cleavage in either 5'- to 3'- or 3'- to 5'-direction to yield nucleoside 5'-phosphates.. Functionally, bidirectionally degrades single-stranded DNA into large acid-insoluble oligonucleotides, which are then degraded further into small acid-soluble oligonucleotides. The polypeptide is Exodeoxyribonuclease 7 large subunit (Bacillus cereus (strain 03BB102)).